A 468-amino-acid chain; its full sequence is Aldehyde dehydrogenase family 3 member B1 (468 aa).

M1 carries the post-translational modification N-acetylmethionine. Residue 188–193 (GNAYVG) coordinates NAD(+). Active-site residues include E210 and C244. 2 S-palmitoyl cysteine lipidation sites follow: C462 and C463. A Cysteine methyl ester modification is found at C465. The S-geranylgeranyl cysteine moiety is linked to residue C465. Positions 466-468 (TLL) are cleaved as a propeptide — removed in mature form.

Belongs to the aldehyde dehydrogenase family. In terms of processing, dually lipidated in the C-terminus; prenylation occurs prior to, and is a prerequisite for palmitoylation. It is also required for activity towards long-chain substrates. Highly expressed in kidney and liver. In brain is expressed at moderate levels in cortex, striatum and hippocampus, and at lower levels in brainstem and cerebellum.

Its subcellular location is the cell membrane. It catalyses the reaction an aldehyde + NAD(+) + H2O = a carboxylate + NADH + 2 H(+). The enzyme catalyses a long-chain fatty aldehyde + NAD(+) + H2O = a long-chain fatty acid + NADH + 2 H(+). The catalysed reaction is a medium-chain fatty aldehyde + NAD(+) + H2O = a medium-chain fatty acid + NADH + 2 H(+). It carries out the reaction octanal + NAD(+) + H2O = octanoate + NADH + 2 H(+). It catalyses the reaction nonanal + NAD(+) + H2O = nonanoate + NADH + 2 H(+). The enzyme catalyses hexadecanoate + NADH + 2 H(+) = hexadecanal + NAD(+) + H2O. The catalysed reaction is (2E)-octenal + NAD(+) + H2O = (2E)-octenoate + NADH + 2 H(+). It carries out the reaction (E)-non-2-enal + NAD(+) + H2O = (E)-non-2-enoate + NADH + 2 H(+). It catalyses the reaction (E)-4-hydroxynon-2-enal + NAD(+) + H2O = (E)-4-hydroxynon-2-enoate + NADH + 2 H(+). The enzyme catalyses (2E)-hexadecenal + NAD(+) + H2O = (E)-hexadec-2-enoate + NADH + 2 H(+). The catalysed reaction is benzaldehyde + NAD(+) + H2O = benzoate + NADH + 2 H(+). It carries out the reaction an aldehyde + NADP(+) + H2O = a carboxylate + NADPH + 2 H(+). It catalyses the reaction a medium-chain fatty aldehyde + NADP(+) + H2O = a medium-chain fatty acid + NADPH + 2 H(+). The enzyme catalyses hexanal + NADP(+) + H2O = hexanoate + NADPH + 2 H(+). The catalysed reaction is octanal + NADP(+) + H2O = octanoate + NADPH + 2 H(+). It carries out the reaction nonanal + NADP(+) + H2O = nonanoate + NADPH + 2 H(+). It catalyses the reaction (2E)-octenal + NADP(+) + H2O = (2E)-octenoate + NADPH + 2 H(+). The enzyme catalyses (E)-non-2-enal + NADP(+) + H2O = (E)-non-2-enoate + NADPH + 2 H(+). The catalysed reaction is (E)-4-hydroxynon-2-enal + NADP(+) + H2O = (E)-4-hydroxynon-2-enoate + NADPH + 2 H(+). It carries out the reaction benzaldehyde + NADP(+) + H2O = benzoate + NADPH + 2 H(+). It functions in the pathway alcohol metabolism; ethanol degradation; acetate from ethanol: step 2/2. Functionally, oxidizes medium and long chain saturated and unsaturated fatty aldehydes generated in the plasma membrane into non-toxic fatty acids. May have a protective role against the cytotoxicity induced by lipid peroxidation. Short-chain fatty aldehydes are not good substrates. Can use both NADP(+) and NAD(+) as electron acceptor in vitro, however in vivo preference will depend on their tissue levels. Low activity towards acetaldehyde and 3,4-dihydroxyphenylacetaldehyde. Able to metabolize aromatic aldehydes such as benzaldehyde to their acid form. This chain is Aldehyde dehydrogenase family 3 member B1 (Aldh3b1), found in Mus musculus (Mouse).